A 115-amino-acid chain; its full sequence is Inner membrane protein YidH (115 aa).

At Met1 to Leu30 the chain is on the cytoplasmic side. A helical membrane pass occupies residues Gly31–Ile51. Topologically, residues Arg52–Glu53 are periplasmic. A helical membrane pass occupies residues Leu54–Trp74. Residues Leu75 to Ser92 lie on the Cytoplasmic side of the membrane. Residues Leu93–Tyr113 traverse the membrane as a helical segment. The Periplasmic portion of the chain corresponds to Ala114–Gly115.

This sequence to M.tuberculosis Rv2272.

It is found in the cell inner membrane. The polypeptide is Inner membrane protein YidH (yidH) (Escherichia coli O157:H7).